Here is a 327-residue protein sequence, read N- to C-terminus: Beta-1,4-galactosyltransferase 7 (327 aa).

Topologically, residues 1–30 are cytoplasmic; it reads MLPSRRKAAQLPWEDGRARLLPGGLRRKCS. Residues 31 to 51 traverse the membrane as a helical; Signal-anchor for type II membrane protein segment; the sequence is IFHLFIAFLLLVFFSLLWLQL. Topologically, residues 52-327 are lumenal; it reads SCSGDMAQVT…KTATPWCIFG (276 aa). The tract at residues 61 to 88 is disordered; it reads TRGQGQETSGPPRACPPEPPPEHWEEDE. Residues 100 to 104 and 139 to 141 each bind UDP-alpha-D-galactose; these read PFRER and FNR. N-linked (GlcNAc...) asparagine glycosylation is present at Asn-154. UDP-alpha-D-galactose is bound by residues 164 to 165, Tyr-194, and Trp-224; that span reads VD. Mn(2+) is bound at residue Asp-165. N-acetyl-D-glucosamine is bound at residue 226–229; sequence REDD. Mn(2+) is bound at residue His-257. UDP-alpha-D-galactose contacts are provided by residues 257–259 and Arg-266; that span reads HLH.

The protein belongs to the glycosyltransferase 7 family. It depends on Mn(2+) as a cofactor.

Its subcellular location is the golgi apparatus. It localises to the golgi stack membrane. It catalyses the reaction 3-O-(beta-D-xylosyl)-L-seryl-[protein] + UDP-alpha-D-galactose = 3-O-(beta-D-galactosyl-(1-&gt;4)-beta-D-xylosyl)-L-seryl-[protein] + UDP + H(+). Its pathway is protein modification; protein glycosylation. Its function is as follows. Required for the biosynthesis of the tetrasaccharide linkage region of proteoglycans, especially for small proteoglycans in skin fibroblasts. This chain is Beta-1,4-galactosyltransferase 7 (B4galt7), found in Mus musculus (Mouse).